The chain runs to 2059 residues: Desmoplakin-A (2059 aa).

Residues 1–11 (MSLSGSQTRLH) show a composition bias toward polar residues. The disordered stretch occupies residues 1 to 25 (MSLSGSQTRLHQISRRSSSRPDLTA). Coiled coils occupy residues 320–354 (IPQK…LLKN) and 397–453 (FKEA…VQTL). The segment at 665 to 690 (EVSSGKTATGVSSGKTATGVSSGKTS) is disordered. Residues 671–690 (TATGVSSGKTATGVSSGKTS) show a composition bias toward low complexity. Coiled coils occupy residues 1062–1229 (MEEL…AELE) and 1261–1383 (LQQD…LQQR). Plectin repeat units follow at residues 1450 to 1488 (YLGG…TLEL), 1489 to 1526 (LEAQ…KDKL), 1564 to 1602 (LLEA…NEIL), 1666 to 1694 (IVDP…FLEL), 1847 to 1885 (LLEA…SVKL), and 1923 to 1961 (FLEF…AQKL). Positions 2008-2059 (KGISSPYNVSSGPSSRSGSRAGSRTGSRSGSRRGSVDYSSSSVSYTFFSSAS) are disordered. Over residues 2011 to 2059 (SSPYNVSSGPSSRSGSRAGSRTGSRSGSRRGSVDYSSSSVSYTFFSSAS) the composition is skewed to low complexity.

Belongs to the plakin or cytolinker family.

Its subcellular location is the cell junction. The protein resides in the desmosome. The protein localises to the cell membrane. Involved in the organization of desmosome cell-cell junctions. Of particular importance in cell adhesion in the skin and during cardiac development. May also play a role in the regulation of Wnt, TGF-beta and Hippo signaling pathways. This chain is Desmoplakin-A, found in Danio rerio (Zebrafish).